A 101-amino-acid chain; its full sequence is Gamma-secretase subunit PEN-2 (101 aa).

Residues 1–17 (MNLERIPNEEKLSLCRR) lie on the Cytoplasmic side of the membrane. The segment at residues 18-36 (YYLGGFAFLPFLWLVNILW) is an intramembrane region (helical). Over 37 to 57 (FFKEAFLKPAYTEQPQIKSYV) the chain is Cytoplasmic. A helical membrane pass occupies residues 58-78 (KKSALGLLLWVAVLTTWITVF). Topologically, residues 79–101 (QHFRAQWGEVGDYLSFTIPLGTA) are lumenal.

It belongs to the PEN-2 family. As to quaternary structure, the functional gamma-secretase complex is composed of at least four polypeptides: a presenilin homodimer (psen1 or psen2), nicastrin (ncstn), aph1 (aph1a or aph1b) and psenen.

Its subcellular location is the endoplasmic reticulum membrane. The protein resides in the golgi apparatus. It is found in the golgi stack membrane. It localises to the cell membrane. The protein localises to the membrane. Essential subunit of the gamma-secretase complex, an endoprotease complex that catalyzes the intramembrane cleavage of integral membrane proteins such as Notch receptors and APP (amyloid-beta precursor protein). The gamma-secretase complex plays a role in Notch and Wnt signaling cascades and regulation of downstream processes via its role in processing key regulatory proteins. This chain is Gamma-secretase subunit PEN-2 (psenen), found in Danio rerio (Zebrafish).